A 178-amino-acid polypeptide reads, in one-letter code: Neuroblastoma suppressor of tumorigenicity 1 (178 aa).

The first 16 residues, 1 to 16 (MLWVLVGTVLPVMLLA), serve as a signal peptide directing secretion. 5 disulfides stabilise this stretch: Cys34–Cys84, Cys48–Cys98, Cys58–Cys117, Cys62–Cys119, and Cys81–Cys122. Residues 34–123 (CEAKNITQIV…IVHCSCQACG (90 aa)) enclose the CTCK domain. The disordered stretch occupies residues 130–178 (GLNVYMQGEDGPGSQPGSHSHSHPHPGCQTPEPEEPPGAPQVEEEGAED).

The protein belongs to the DAN family. Homodimer. In terms of tissue distribution, most abundant in lung, brain, intestine and kidney.

The protein localises to the secreted. Possible candidate as a tumor suppressor gene of neuroblastoma. May play an important role in preventing cells from entering the final stage (G1/S) of the transformation process. The protein is Neuroblastoma suppressor of tumorigenicity 1 (Nbl1) of Rattus norvegicus (Rat).